The following is a 180-amino-acid chain: KxDL motif-containing protein 1 (180 aa).

Polar residues-rich tracts occupy residues 126-144 and 158-170; these read TTIATSEQSTESCDTSPSI and QAPSDTPSVNGQI. The tract at residues 126–180 is disordered; that stretch reads TTIATSEQSTESCDTSPSIISPAMSQDFEDLSQAPSDTPSVNGQILTDEEVVHED.

This sequence belongs to the KXD1 family. As to quaternary structure, associates with the BLOC-1 complex.

Its subcellular location is the lysosome membrane. Its function is as follows. As part of a BORC-like complex may play a role in lysosomes movement and localization at the cell periphery. Associated with the cytosolic face of lysosomes, this complex may couple lysosomes to microtubule plus-end-directed kinesin motor. May also be involved in the biogenesis of lysosome-related organelles such as melanosomes. The protein is KxDL motif-containing protein 1 (kxd1) of Xenopus tropicalis (Western clawed frog).